Here is a 233-residue protein sequence, read N- to C-terminus: Small ribosomal subunit protein uS2 (233 aa).

This sequence belongs to the universal ribosomal protein uS2 family.

The sequence is that of Small ribosomal subunit protein uS2 from Clostridium novyi (strain NT).